A 101-amino-acid chain; its full sequence is CRISPR-associated endoribonuclease Cas2 (101 aa).

Residue Asp8 participates in Mg(2+) binding.

Belongs to the CRISPR-associated endoribonuclease Cas2 protein family. In terms of assembly, homodimer, forms a heterotetramer with a Cas1 homodimer. Mg(2+) is required as a cofactor.

In terms of biological role, CRISPR (clustered regularly interspaced short palindromic repeat), is an adaptive immune system that provides protection against mobile genetic elements (viruses, transposable elements and conjugative plasmids). CRISPR clusters contain sequences complementary to antecedent mobile elements and target invading nucleic acids. CRISPR clusters are transcribed and processed into CRISPR RNA (crRNA). Functions as a ssRNA-specific endoribonuclease. Involved in the integration of spacer DNA into the CRISPR cassette. The sequence is that of CRISPR-associated endoribonuclease Cas2 from Lacticaseibacillus rhamnosus (strain ATCC 53103 / LMG 18243 / GG) (Lactobacillus rhamnosus).